The primary structure comprises 488 residues: GTPase Der (488 aa).

EngA-type G domains lie at 3–166 and 193–366; these read PVIA…PRDP and IKIA…MSAV. GTP-binding positions include 9 to 16, 56 to 60, 118 to 121, 199 to 206, 246 to 250, and 311 to 314; these read GRPNVGKS, DTGGI, NKID, DTAGV, and NKWD. The 85-residue stretch at 367-451 folds into the KH-like domain; sequence TRWPTSRLTQ…PIRIEYKGGD (85 aa). Residues 449–461 show a composition bias toward basic and acidic residues; the sequence is GGDNPFEGKKNTL. Residues 449–488 form a disordered region; the sequence is GGDNPFEGKKNTLTDRQVNKKRRLMSHHKKAEKKRRDKRK. Positions 467-488 are enriched in basic residues; the sequence is NKKRRLMSHHKKAEKKRRDKRK.

The protein belongs to the TRAFAC class TrmE-Era-EngA-EngB-Septin-like GTPase superfamily. EngA (Der) GTPase family. Associates with the 50S ribosomal subunit.

Its function is as follows. GTPase that plays an essential role in the late steps of ribosome biogenesis. This is GTPase Der from Pseudomonas entomophila (strain L48).